Reading from the N-terminus, the 60-residue chain is Large ribosomal subunit protein bL32 (60 aa).

Residues 1-23 (MAKHPVPKKKTSKSKRDMRRSHH) show a composition bias toward basic residues. Positions 1–26 (MAKHPVPKKKTSKSKRDMRRSHHALT) are disordered.

The protein belongs to the bacterial ribosomal protein bL32 family.

This chain is Large ribosomal subunit protein bL32, found in Deinococcus deserti (strain DSM 17065 / CIP 109153 / LMG 22923 / VCD115).